Reading from the N-terminus, the 204-residue chain is MKIPSVILASSSSARLRLLKTVGINPIVMPSNFDESTIKLKEPRQLVETLAQAKAETIANSIMKEKLPEKQSNLILGCDSVLVIEDQIYGKPNDKQEAITRWQKMRGQVGQLYTGHALIDLSQNKTIVLCRMTKVHFSHVNDQEIEAYVATEEPLKCAGCFAIDGIGGLFIEKIDGCHTNVIGLSLPLFRVMLNNLGYQVSNFW.

Aspartate 79 (proton acceptor) is an active-site residue.

The protein belongs to the Maf family. Requires a divalent metal cation as cofactor.

The protein localises to the cytoplasm. It carries out the reaction a ribonucleoside 5'-triphosphate + H2O = a ribonucleoside 5'-phosphate + diphosphate + H(+). It catalyses the reaction a 2'-deoxyribonucleoside 5'-triphosphate + H2O = a 2'-deoxyribonucleoside 5'-phosphate + diphosphate + H(+). Functionally, nucleoside triphosphate pyrophosphatase. May have a dual role in cell division arrest and in preventing the incorporation of modified nucleotides into cellular nucleic acids. This chain is Nucleoside triphosphate pyrophosphatase, found in Trichodesmium erythraeum (strain IMS101).